Reading from the N-terminus, the 85-residue chain is Putative RING finger protein 095L (85 aa).

The segment at 39–73 adopts an RING-type; degenerate zinc-finger fold; it reads CPIWYNYQVNTVFLPCAHVACYLCSKIIKNCHLCR.

This is Putative RING finger protein 095L from Invertebrate iridescent virus 6 (IIV-6).